Consider the following 751-residue polypeptide: Zinc finger protein 337 (751 aa).

The KRAB domain maps to 12-83 (LAFGDVTVDF…ERRRRPGPCA (72 aa)). A compositionally biased stretch (low complexity) spans 101-116 (QRQQQLQFSDQSFQSD). The tract at residues 101–163 (QRQQQLQFSD…SSQGQRENPT (63 aa)) is disordered. A C2H2-type 1; degenerate zinc finger spans residues 180 to 202 (FKCAERGQDFSRKMMVIIHKKAH). 9 consecutive C2H2-type zinc fingers follow at residues 208–230 (FTCRECHQGFRDESALLLHQNTH), 236–258 (YVCSVCGRGFSLKANLLRHQRTH), 264–286 (FLCKVCGRGYTSKSYLTVHERTH), 292–314 (YECQECGRRFNDKSSYNKHLKAH), 320–342 (FVCKECGRGYTNKSYFVVHKRIH), 348–370 (YRCQECGRGFSNKSHLITHQRTH), 376–398 (FACRQCKQSFSVKGSLLRHQRTH), 404–426 (FVCKDCERSFSQKSTLVYHQRTH), and 432–454 (FVCRECGQGFIQKSTLVKHQITH). Lys458 is covalently cross-linked (Glycyl lysine isopeptide (Lys-Gly) (interchain with G-Cter in SUMO2)). 10 C2H2-type zinc fingers span residues 460–482 (FVCKDCGRGFIQKSTFTLHQRTH), 488–510 (YGCRECGRRFRDKSSYNKHLRAH), 516–538 (FFCRDCGRGFTLKPNLTIHQRTH), 544–566 (FMCKQCEKSFSLKANLLRHQWTH), 572–594 (FNCKDCGRGFILKSTLLFHQKTH), 600–622 (FICSECGQGFIWKSNLVKHQLAH), 628–650 (FVCKECGRGFNWKGNLLTHQRTH), 656–679 (FVCNVCGQGFSWKRSLTRHHWRIH), 685–707 (FVCQECKRGYTSKSDLTVHERIH), and 713–735 (YECQECGRKFSNKSYYSKHLKRH).

Belongs to the krueppel C2H2-type zinc-finger protein family.

Its subcellular location is the nucleus. Functionally, may be involved in transcriptional regulation. In Homo sapiens (Human), this protein is Zinc finger protein 337 (ZNF337).